We begin with the raw amino-acid sequence, 292 residues long: Protein rogdi homolog (292 aa).

Residues 1 to 12 (MEVQSLTITTNY) show a composition bias toward polar residues. Positions 1–25 (MEVQSLTITTNYPPKPASPNPQDIR) are disordered.

The protein belongs to the rogdi family.

It is found in the nucleus envelope. The sequence is that of Protein rogdi homolog from Caenorhabditis elegans.